Reading from the N-terminus, the 202-residue chain is Orotate phosphoribosyltransferase (202 aa).

5-phospho-alpha-D-ribose 1-diphosphate-binding positions include arginine 94, lysine 98, histidine 100, and 120–128 (EDLISTGGS). Residue serine 124 participates in orotate binding.

This sequence belongs to the purine/pyrimidine phosphoribosyltransferase family. PyrE subfamily. In terms of assembly, homodimer. Mg(2+) is required as a cofactor.

The enzyme catalyses orotidine 5'-phosphate + diphosphate = orotate + 5-phospho-alpha-D-ribose 1-diphosphate. It functions in the pathway pyrimidine metabolism; UMP biosynthesis via de novo pathway; UMP from orotate: step 1/2. In terms of biological role, catalyzes the transfer of a ribosyl phosphate group from 5-phosphoribose 1-diphosphate to orotate, leading to the formation of orotidine monophosphate (OMP). This Oceanobacillus iheyensis (strain DSM 14371 / CIP 107618 / JCM 11309 / KCTC 3954 / HTE831) protein is Orotate phosphoribosyltransferase.